We begin with the raw amino-acid sequence, 1201 residues long: DNA-directed RNA polymerase subunit beta (1201 aa).

The disordered stretch occupies residues 1165–1201 (DALSKFKQQQDEKAADKAAKADAAKPSETTNAQQDNQ). Residues 1172–1189 (QQQDEKAADKAAKADAAK) are compositionally biased toward basic and acidic residues. Residues 1191 to 1201 (SETTNAQQDNQ) are compositionally biased toward polar residues.

Belongs to the RNA polymerase beta chain family. The RNAP catalytic core consists of 2 alpha, 1 beta, 1 beta' and 1 omega subunit. When a sigma factor is associated with the core the holoenzyme is formed, which can initiate transcription.

The enzyme catalyses RNA(n) + a ribonucleoside 5'-triphosphate = RNA(n+1) + diphosphate. In terms of biological role, DNA-dependent RNA polymerase catalyzes the transcription of DNA into RNA using the four ribonucleoside triphosphates as substrates. The polypeptide is DNA-directed RNA polymerase subunit beta (Lactiplantibacillus plantarum (strain ATCC BAA-793 / NCIMB 8826 / WCFS1) (Lactobacillus plantarum)).